Here is a 140-residue protein sequence, read N- to C-terminus: MITINQITDRKARGPKKKRKTLLTGYPQKKGYCMRVYETKPKKPNSAIRKVAKVTIKLKNKRKNLIAYIPGFGPHNLQPLSTVLVKGGRCQDLPGVKYRLVRKHYDFLAAERFVRKNRRSKFSVKNLETKAKKGKAVRIE.

Belongs to the universal ribosomal protein uS12 family.

It localises to the mitochondrion. This Dictyostelium discoideum (Social amoeba) protein is Small ribosomal subunit protein uS12m (mrps12).